Here is a 591-residue protein sequence, read N- to C-terminus: PDZ and LIM domain protein 5 (591 aa).

Position 2 is an N-acetylserine (S2). S2 carries the post-translational modification Phosphoserine. The region spanning 2 to 85 (SNYSVSLVGP…SLNMTLQRAS (84 aa)) is the PDZ domain. N6-acetyllysine; alternate is present on K89. An N6-succinyllysine; alternate modification is found at K89. K89 participates in a covalent cross-link: Glycyl lysine isopeptide (Lys-Gly) (interchain with G-Cter in SUMO2); alternate. Residues E102, K105, S111, S134, and S137 each carry the phosphoserine modification. 2 disordered regions span residues 121–166 (TNMA…PTPV) and 186–398 (SADQ…DQDT). Polar residues predominate over residues 134–143 (SVSSPKVTSI). Residues 144-166 (PSPSSAFTPAHAATSSHASPTPV) are compositionally biased toward low complexity. Composition is skewed to polar residues over residues 186–195 (SADQCSSPPN) and 205–217 (RQPT…SESA). 3 positions are modified to phosphoserine: Q218, S228, and S260. 2 stretches are compositionally biased toward basic and acidic residues: residues 258–273 (DASK…DWRP) and 294–304 (HLTESENDNTK). Residues 310–339 (QEPSQQPASSGASPLSASEGPESPGSSRPS) show a composition bias toward low complexity. 3 positions are modified to phosphoserine: S313, P316, and S322. K350 bears the N6-acetyllysine mark. Polar residues predominate over residues 353-385 (GSTSVKSPSWQRPNQAAPSTGRISNNARSSGTG). A phosphoserine mark is found at S359 and S361. LIM zinc-binding domains are found at residues 413–472 (PMCA…FFAP), 472–531 (PECG…LFGT), and 531–591 (TICR…SVNF).

In terms of assembly, interacts with various PKC isoforms through the LIM domains. Interacts with actin and alpha-actinin through the PDZ domain. Interacts (via LIM domains) with SIPA1L1/SPAR; this interaction may occur preferentially with isoform 1.

The protein resides in the postsynaptic density. It localises to the presynapse. The protein localises to the postsynapse. It is found in the cytoplasm. Its subcellular location is the cytosol. Functionally, may play an important role in the heart development by scaffolding PKC to the Z-disk region. May play a role in the regulation of cardiomyocyte expansion. Isoforms lacking the LIM domains may negatively modulate the scaffolding activity of isoform 1. Overexpression promotes the development of heart hypertrophy. Contributes to the regulation of dendritic spine morphogenesis in neurons. May be required to restrain postsynaptic growth of excitatory synapses. Isoform 1, but not isoform 2, expression favors spine thinning and elongation. The sequence is that of PDZ and LIM domain protein 5 from Mus musculus (Mouse).